A 169-amino-acid polypeptide reads, in one-letter code: Cilia- and flagella-associated protein 68 (169 aa).

Mn stretches follow at residues 98-109 and 139-149; these read TTYDTSYNNRRP and KSTYMTSYSKP.

This sequence belongs to the CFAP68 family. Microtubule inner protein component of sperm flagellar doublet microtubules.

It localises to the cytoplasm. It is found in the cytoskeleton. The protein resides in the cilium axoneme. The protein localises to the flagellum axoneme. Its subcellular location is the nucleus. It localises to the cell projection. It is found in the cilium. Functionally, microtubule inner protein (MIP) part of the dynein-decorated doublet microtubules (DMTs) in cilia axoneme, which is required for motile cilia beating. The chain is Cilia- and flagella-associated protein 68 (CFAP68) from Bos taurus (Bovine).